A 414-amino-acid polypeptide reads, in one-letter code: Sarcosine oxidase subunit beta (414 aa).

FAD-binding residues include glycine 42, histidine 43, glutamate 64, asparagine 72, threonine 77, and isoleucine 79. Tele-8alpha-FMN histidine is present on histidine 183. Valine 207, glycine 364, glycine 367, and lysine 369 together coordinate FAD.

It belongs to the SoxB family. As to quaternary structure, heterotetramer composed of subunits alpha (SoxA), beta (SoxB), gamma (SoxG) and delta (SoxD). Requires FAD as cofactor. FMN is required as a cofactor.

It is found in the cytoplasm. It catalyses the reaction sarcosine + (6S)-5,6,7,8-tetrahydrofolate + O2 = (6R)-5,10-methylene-5,6,7,8-tetrahydrofolate + glycine + H2O2. The catalysed reaction is sarcosine + O2 + H2O = formaldehyde + glycine + H2O2. In the presence of tetrahydrofolate, catalyzes the oxidative demethylation of sarcosine to yield glycine, 5,10-methylenetetrahydrofolate and hydrogen peroxide. In the absence of tetrahydrofolate, catalyzes the oxidative demethylation of sarcosine to yield glycine, formaldehyde and hydrogen peroxide. The polypeptide is Sarcosine oxidase subunit beta (soxB) (Rhodobacter capsulatus (strain ATCC BAA-309 / NBRC 16581 / SB1003)).